The following is a 77-amino-acid chain: Exodeoxyribonuclease 7 small subunit (77 aa).

This sequence belongs to the XseB family. As to quaternary structure, heterooligomer composed of large and small subunits.

It is found in the cytoplasm. The catalysed reaction is Exonucleolytic cleavage in either 5'- to 3'- or 3'- to 5'-direction to yield nucleoside 5'-phosphates.. Functionally, bidirectionally degrades single-stranded DNA into large acid-insoluble oligonucleotides, which are then degraded further into small acid-soluble oligonucleotides. In Lysinibacillus sphaericus (strain C3-41), this protein is Exodeoxyribonuclease 7 small subunit.